A 264-amino-acid polypeptide reads, in one-letter code: MFLEKIVQVRREKVRQAKNKIPFWEMRKMAEEQVSHRLPLSLRQALLRENAKGKVGVIAEIKKASPSKGVLREQLDPEEVAQVYAKSGAAAISVLTEEDYFLGSPEYLKAVRAVVSLPILRKDFILDPYQIYEAKVLGADAVLLITSLLASVELKEMIKITEGLGMEALVEAHSLEEVEKALTAGARLIGINNRDLRTFATNIDVSLKLAPVLKEAGVVMVSESGIRSKEDIKALMTAGYHGILIGEALVRAPDPGKALEVLLA.

The protein belongs to the TrpC family.

The catalysed reaction is 1-(2-carboxyphenylamino)-1-deoxy-D-ribulose 5-phosphate + H(+) = (1S,2R)-1-C-(indol-3-yl)glycerol 3-phosphate + CO2 + H2O. The protein operates within amino-acid biosynthesis; L-tryptophan biosynthesis; L-tryptophan from chorismate: step 4/5. This Carboxydothermus hydrogenoformans (strain ATCC BAA-161 / DSM 6008 / Z-2901) protein is Indole-3-glycerol phosphate synthase.